The sequence spans 171 residues: Co-chaperone protein HscB (171 aa).

Residues D2–L74 enclose the J domain.

The protein belongs to the HscB family. Interacts with HscA and stimulates its ATPase activity. Interacts with IscU.

Its function is as follows. Co-chaperone involved in the maturation of iron-sulfur cluster-containing proteins. Seems to help targeting proteins to be folded toward HscA. In Salmonella agona (strain SL483), this protein is Co-chaperone protein HscB.